Consider the following 363-residue polypeptide: 5-formaminoimidazole-4-carboxamide-1-(beta)-D-ribofuranosyl 5'-monophosphate synthetase (363 aa).

5-amino-1-(5-phospho-beta-D-ribosyl)imidazole-4-carboxamide contacts are provided by His-29 and Ser-96. Residues 118–354 enclose the ATP-grasp domain; it reads RDILRWEAER…IALEIKNAIK (237 aa). ATP contacts are provided by residues 148-210 and Glu-232; that span reads PSEI…CNYC. Asn-260 is a 5-amino-1-(5-phospho-beta-D-ribosyl)imidazole-4-carboxamide binding site. Residues Gln-299 and Glu-312 each contribute to the Mg(2+) site.

Belongs to the phosphohexose mutase family. It depends on Mg(2+) as a cofactor. Mn(2+) serves as cofactor.

It carries out the reaction 5-amino-1-(5-phospho-beta-D-ribosyl)imidazole-4-carboxamide + formate + ATP = 5-formamido-1-(5-phospho-D-ribosyl)imidazole-4-carboxamide + ADP + phosphate. It participates in purine metabolism; IMP biosynthesis via de novo pathway; 5-formamido-1-(5-phospho-D-ribosyl)imidazole-4-carboxamide from 5-amino-1-(5-phospho-D-ribosyl)imidazole-4-carboxamide (formate route): step 1/1. In terms of biological role, catalyzes the ATP- and formate-dependent formylation of 5-aminoimidazole-4-carboxamide-1-beta-d-ribofuranosyl 5'-monophosphate (AICAR) to 5-formaminoimidazole-4-carboxamide-1-beta-d-ribofuranosyl 5'-monophosphate (FAICAR) in the absence of folates. This chain is 5-formaminoimidazole-4-carboxamide-1-(beta)-D-ribofuranosyl 5'-monophosphate synthetase, found in Methanobrevibacter smithii (strain ATCC 35061 / DSM 861 / OCM 144 / PS).